Here is a 167-residue protein sequence, read N- to C-terminus: NAD(P)H-quinone oxidoreductase subunit I, chloroplastic (167 aa).

4Fe-4S ferredoxin-type domains follow at residues 55-84 and 95-124; these read GRIHFEFDKCIACEVCVRVCPIDLPVVDWK and LNYSIDFGICIFCGNCVEYCPTNCLSMTEE. Residues C64, C67, C70, C74, C104, C107, C110, and C114 each contribute to the [4Fe-4S] cluster site.

It belongs to the complex I 23 kDa subunit family. NDH is composed of at least 16 different subunits, 5 of which are encoded in the nucleus. The cofactor is [4Fe-4S] cluster.

The protein resides in the plastid. It localises to the chloroplast thylakoid membrane. The catalysed reaction is a plastoquinone + NADH + (n+1) H(+)(in) = a plastoquinol + NAD(+) + n H(+)(out). It carries out the reaction a plastoquinone + NADPH + (n+1) H(+)(in) = a plastoquinol + NADP(+) + n H(+)(out). In terms of biological role, NDH shuttles electrons from NAD(P)H:plastoquinone, via FMN and iron-sulfur (Fe-S) centers, to quinones in the photosynthetic chain and possibly in a chloroplast respiratory chain. The immediate electron acceptor for the enzyme in this species is believed to be plastoquinone. Couples the redox reaction to proton translocation, and thus conserves the redox energy in a proton gradient. The polypeptide is NAD(P)H-quinone oxidoreductase subunit I, chloroplastic (Citrus sinensis (Sweet orange)).